The sequence spans 119 residues: Ribonuclease P protein component (119 aa).

Belongs to the RnpA family. In terms of assembly, consists of a catalytic RNA component (M1 or rnpB) and a protein subunit.

It carries out the reaction Endonucleolytic cleavage of RNA, removing 5'-extranucleotides from tRNA precursor.. Functionally, RNaseP catalyzes the removal of the 5'-leader sequence from pre-tRNA to produce the mature 5'-terminus. It can also cleave other RNA substrates such as 4.5S RNA. The protein component plays an auxiliary but essential role in vivo by binding to the 5'-leader sequence and broadening the substrate specificity of the ribozyme. This is Ribonuclease P protein component from Coprothermobacter proteolyticus (strain ATCC 35245 / DSM 5265 / OCM 4 / BT).